Reading from the N-terminus, the 468-residue chain is ATP synthase subunit beta (468 aa).

155-162 (GGAGVGKT) lines the ATP pocket.

Belongs to the ATPase alpha/beta chains family. In terms of assembly, F-type ATPases have 2 components, CF(1) - the catalytic core - and CF(0) - the membrane proton channel. CF(1) has five subunits: alpha(3), beta(3), gamma(1), delta(1), epsilon(1). CF(0) has three main subunits: a(1), b(2) and c(9-12). The alpha and beta chains form an alternating ring which encloses part of the gamma chain. CF(1) is attached to CF(0) by a central stalk formed by the gamma and epsilon chains, while a peripheral stalk is formed by the delta and b chains.

The protein localises to the cell membrane. The catalysed reaction is ATP + H2O + 4 H(+)(in) = ADP + phosphate + 5 H(+)(out). Its function is as follows. Produces ATP from ADP in the presence of a proton gradient across the membrane. The catalytic sites are hosted primarily by the beta subunits. The polypeptide is ATP synthase subunit beta (Streptococcus pyogenes serotype M49 (strain NZ131)).